Consider the following 673-residue polypeptide: DNA ligase (673 aa).

NAD(+) is bound by residues 34-38, 83-84, and Glu-116; these read DAEYD and SL. The N6-AMP-lysine intermediate role is filled by Lys-118. Residues Arg-139, Glu-176, Lys-293, and Lys-317 each coordinate NAD(+). Residues Cys-411, Cys-414, Cys-429, and Cys-435 each contribute to the Zn(2+) site. Positions 595 to 673 constitute a BRCT domain; that stretch reads NQQNPFFGKT…EDEFLKWVNS (79 aa).

It belongs to the NAD-dependent DNA ligase family. LigA subfamily. Mg(2+) is required as a cofactor. Requires Mn(2+) as cofactor.

It catalyses the reaction NAD(+) + (deoxyribonucleotide)n-3'-hydroxyl + 5'-phospho-(deoxyribonucleotide)m = (deoxyribonucleotide)n+m + AMP + beta-nicotinamide D-nucleotide.. DNA ligase that catalyzes the formation of phosphodiester linkages between 5'-phosphoryl and 3'-hydroxyl groups in double-stranded DNA using NAD as a coenzyme and as the energy source for the reaction. It is essential for DNA replication and repair of damaged DNA. In Legionella pneumophila (strain Paris), this protein is DNA ligase.